We begin with the raw amino-acid sequence, 317 residues long: tRNA dimethylallyltransferase (317 aa).

Residue 19–26 (GPTASGKS) coordinates ATP. Residue 21-26 (TASGKS) participates in substrate binding. Residues 49–52 (DSAQ) form an interaction with substrate tRNA region.

This sequence belongs to the IPP transferase family. Monomer. It depends on Mg(2+) as a cofactor.

The enzyme catalyses adenosine(37) in tRNA + dimethylallyl diphosphate = N(6)-dimethylallyladenosine(37) in tRNA + diphosphate. Catalyzes the transfer of a dimethylallyl group onto the adenine at position 37 in tRNAs that read codons beginning with uridine, leading to the formation of N6-(dimethylallyl)adenosine (i(6)A). This is tRNA dimethylallyltransferase from Erythrobacter litoralis (strain HTCC2594).